The sequence spans 642 residues: Threonine--tRNA ligase (642 aa).

The region spanning 1 to 61 is the TGS domain; it reads MPVITLPDGS…ENDATLSIIT (61 aa). The segment at 243-534 is catalytic; that stretch reads DHRKIGKQLD…LTEEFAGFFP (292 aa). Residues C334, H385, and H511 each coordinate Zn(2+).

The protein belongs to the class-II aminoacyl-tRNA synthetase family. Homodimer. Zn(2+) serves as cofactor.

Its subcellular location is the cytoplasm. The catalysed reaction is tRNA(Thr) + L-threonine + ATP = L-threonyl-tRNA(Thr) + AMP + diphosphate + H(+). Functionally, catalyzes the attachment of threonine to tRNA(Thr) in a two-step reaction: L-threonine is first activated by ATP to form Thr-AMP and then transferred to the acceptor end of tRNA(Thr). Also edits incorrectly charged L-seryl-tRNA(Thr). This Salmonella heidelberg (strain SL476) protein is Threonine--tRNA ligase.